Reading from the N-terminus, the 261-residue chain is Small ribosomal subunit protein uS2 (261 aa).

Belongs to the universal ribosomal protein uS2 family.

This chain is Small ribosomal subunit protein uS2, found in Streptococcus mutans serotype c (strain ATCC 700610 / UA159).